A 274-amino-acid polypeptide reads, in one-letter code: Indole-3-glycerol phosphate synthase (274 aa).

It belongs to the TrpC family.

The enzyme catalyses 1-(2-carboxyphenylamino)-1-deoxy-D-ribulose 5-phosphate + H(+) = (1S,2R)-1-C-(indol-3-yl)glycerol 3-phosphate + CO2 + H2O. It functions in the pathway amino-acid biosynthesis; L-tryptophan biosynthesis; L-tryptophan from chorismate: step 4/5. The sequence is that of Indole-3-glycerol phosphate synthase from Kineococcus radiotolerans (strain ATCC BAA-149 / DSM 14245 / SRS30216).